The following is a 130-amino-acid chain: MPQTNPFHSLVPRKMTDTELARSIRLNIEAELDAINLYAAHIDATDNEDAKAILQHVMDEEREHAALFWELIARLDPEQAAHAKEAVEKYRLITSGASHEAVEAVGKEGAAPSPADVTPEKRLTVGSLRR.

The Fe cation site is built by Glu31, Glu61, and His64. The Di-iron-binding motif signature appears at 61–64; the sequence is EREH. A disordered region spans residues 103–130; that stretch reads EAVGKEGAAPSPADVTPEKRLTVGSLRR. Residues 123-130 are probable targeting peptide; sequence LTVGSLRR.

Belongs to the ferritin-like superfamily.

The protein localises to the encapsulin nanocompartment. Functionally, cargo protein of a type 1 encapsulin nanocompartment. May help nucleate Fe atoms in the interior of the encapsulin nanocompartment. Present in about 92 copies/encapsulin nanocompartment. The polypeptide is Encapsulin nanocompartment cargo protein EncC (Myxococcus xanthus (strain DK1622)).